A 404-amino-acid polypeptide reads, in one-letter code: DNA polymerase processivity factor BMRF1 (404 aa).

The segment at 1-300 (METTQTLRFK…SVILFNHASE (300 aa)) is homodimerization; DNA binding and DNA polymerase processivity. The tract at residues 301 to 404 (EAAASTASEP…KVKQAFNPLI (104 aa)) is transcriptional activation. Residues 302-404 (AAASTASEPE…KVKQAFNPLI (103 aa)) form a disordered region. Positions 335–344 (SPSPPPPPRT) are enriched in pro residues. S337 carries the phosphoserine modification. T344 carries the phosphothreonine modification. A Phosphoserine modification is found at S349. Phosphothreonine is present on T355.

This sequence belongs to the herpesviridae DNA polymerase accessory subunit family. As to quaternary structure, homodimer. Two dimers can adopt a tetrameric ring-like structure. Forms a complex with the DNA-binding protein BALF2, the DNA polymerase subunit BALF5, and the alkaline exonuclease BGLF5. Interacts (via N-terminus) with BZLF1 (via bZIP domain); this interaction may inhibit BZLF1-induced transcription of the BMRF1 promoter. Interacts (via C-terminus) with host NuRD complex; this interaction is important for transcriptional activation of EBV promoters and inhibition of the ubiquitination step of DDR signaling. Post-translationally, phosphorylated by the viral BGLF4 kinase.

The protein localises to the virion tegument. It localises to the host nucleus. Acts as a DNA polymerase processivity factor; a transcriptional activator for several EBV promoters and inhibits the host DNA damage response (DDR) to double-stranded DNA breaks. Plays an essential role in the viral lytic DNA replication by acting as a polymerase accessory subunit. Stimulates the viral DNA polymerase activity and appears to function with it as a holoenzyme. Increases the processivity of the viral polymerase, probably by acting as a sliding clamp that prevents dissociation of the polymerase from the active template. In addition, BMRF1 transcriptionally activates the oriLyt early BHLF1 promoter. Promotes G1/S cell cycle arrest through p53 induction. This chain is DNA polymerase processivity factor BMRF1, found in Epstein-Barr virus (strain AG876) (HHV-4).